The following is a 737-amino-acid chain: Angiotensin-converting enzyme-like protein Ace3 (737 aa).

An N-terminal signal peptide occupies residues 1 to 23; it reads MNLPWALLLVLLSHRQLLPWLRT. At 24 to 639 the chain is on the extracellular side; sequence VGETSLNDFY…TDTEPEQAYL (616 aa). The Peptidase M2 domain occupies 32-611; it reads FYSEAQAKLF…VKQGDTLGWP (580 aa). An intrachain disulfide couples C146 to C152. Residues R180 and Y218 each contribute to the chloride site. A disulfide bridge links C346 with C364. The Zn(2+) site is built by H377 and H381. N390 is a glycosylation site (N-linked (GlcNAc...) asparagine). E405 contributes to the Zn(2+) binding site. Residues W479, R483, and R516 each contribute to the chloride site. An intrachain disulfide couples C532 to C544. The helical transmembrane segment at 640–660 threads the bilayer; it reads GQWVLLSMSFFMLVLILALGF. The Cytoplasmic portion of the chain corresponds to 661-700; it reads RLHYLEKQLLDEDTMILKTLPYSYFLGIAMEPHQAARKQW. The helical transmembrane segment at 701-721 threads the bilayer; sequence LLLGLCCILMLCCIGLLIRIV. The Extracellular segment spans residues 722-737; sequence TQNTENTPWMKNEGQS.

The protein belongs to the peptidase M2 family. As to quaternary structure, interacts with IZUMO1. Zn(2+) serves as cofactor. Expressed in sperm and testis (at protein level). Expressed in heart and testis. Not detected in kidney, lung, liver, brain, ovary, spleen and thymus.

The protein resides in the cytoplasmic vesicle. Its subcellular location is the secretory vesicle. The protein localises to the acrosome membrane. This chain is Angiotensin-converting enzyme-like protein Ace3, found in Mus musculus (Mouse).